The following is a 413-amino-acid chain: Serine hydroxymethyltransferase (413 aa).

(6S)-5,6,7,8-tetrahydrofolate-binding positions include leucine 120 and 124–126; that span reads GHL. Lysine 229 is subject to N6-(pyridoxal phosphate)lysine. 352 to 354 contributes to the (6S)-5,6,7,8-tetrahydrofolate binding site; the sequence is SPF.

This sequence belongs to the SHMT family. In terms of assembly, homodimer. Pyridoxal 5'-phosphate is required as a cofactor.

The protein resides in the cytoplasm. It carries out the reaction (6R)-5,10-methylene-5,6,7,8-tetrahydrofolate + glycine + H2O = (6S)-5,6,7,8-tetrahydrofolate + L-serine. It participates in one-carbon metabolism; tetrahydrofolate interconversion. Its pathway is amino-acid biosynthesis; glycine biosynthesis; glycine from L-serine: step 1/1. Its function is as follows. Catalyzes the reversible interconversion of serine and glycine with tetrahydrofolate (THF) serving as the one-carbon carrier. This reaction serves as the major source of one-carbon groups required for the biosynthesis of purines, thymidylate, methionine, and other important biomolecules. Also exhibits THF-independent aldolase activity toward beta-hydroxyamino acids, producing glycine and aldehydes, via a retro-aldol mechanism. The chain is Serine hydroxymethyltransferase from Heliobacterium modesticaldum (strain ATCC 51547 / Ice1).